The primary structure comprises 155 residues: 3-hydroxyacyl-[acyl-carrier-protein] dehydratase FabZ (155 aa).

His-54 is an active-site residue.

The protein belongs to the thioester dehydratase family. FabZ subfamily.

It localises to the cytoplasm. It catalyses the reaction a (3R)-hydroxyacyl-[ACP] = a (2E)-enoyl-[ACP] + H2O. Involved in unsaturated fatty acids biosynthesis. Catalyzes the dehydration of short chain beta-hydroxyacyl-ACPs and long chain saturated and unsaturated beta-hydroxyacyl-ACPs. This Burkholderia lata (strain ATCC 17760 / DSM 23089 / LMG 22485 / NCIMB 9086 / R18194 / 383) protein is 3-hydroxyacyl-[acyl-carrier-protein] dehydratase FabZ.